A 1335-amino-acid chain; its full sequence is Aldehyde oxidase 2 (1335 aa).

Residues 8-95 (DVLVFFVNGR…GAAVTTVEGV (88 aa)) form the 2Fe-2S ferredoxin-type domain. Residues cysteine 47, cysteine 52, cysteine 55, and cysteine 77 each coordinate [2Fe-2S] cluster. Mo-molybdopterin is bound at residue glutamine 116. Positions 117, 120, 152, and 154 each coordinate [2Fe-2S] cluster. Cysteine 154 contributes to the Mo-molybdopterin binding site. The region spanning 242–427 (FRGDRVTWVS…ESVHIPHSQK (186 aa)) is the FAD-binding PCMH-type domain. FAD is bound by residues 270 to 277 (LVLGNTAL), alanine 351, serine 360, histidine 364, aspartate 373, and leucine 417. Mo-molybdopterin-binding positions include 821–822 (GF), 1103–1106 (ASVG), glutamine 1218, and leucine 1285. The active-site Proton acceptor; for azaheterocycle hydroxylase activity is glutamate 1287.

Belongs to the xanthine dehydrogenase family. Homodimer. [2Fe-2S] cluster is required as a cofactor. It depends on FAD as a cofactor. Mo-molybdopterin serves as cofactor. Detected in kidney, Harderian gland and olfactory mucosa.

It localises to the cytoplasm. It catalyses the reaction an aldehyde + O2 + H2O = a carboxylate + H2O2 + H(+). In terms of biological role, oxidase with broad substrate specificity, oxidizing aromatic azaheterocycles, such as phthalazine, as well as aldehydes, such as benzaldehyde and retinal. This chain is Aldehyde oxidase 2 (AOX2), found in Cavia porcellus (Guinea pig).